We begin with the raw amino-acid sequence, 366 residues long: Chorismate synthase (366 aa).

Arg48 lines the NADP(+) pocket. Residues 125–127 (RSS), 238–239 (NA), Gly278, 293–297 (KPTSS), and Arg319 contribute to the FMN site.

This sequence belongs to the chorismate synthase family. In terms of assembly, homotetramer. It depends on FMNH2 as a cofactor.

The enzyme catalyses 5-O-(1-carboxyvinyl)-3-phosphoshikimate = chorismate + phosphate. It participates in metabolic intermediate biosynthesis; chorismate biosynthesis; chorismate from D-erythrose 4-phosphate and phosphoenolpyruvate: step 7/7. Functionally, catalyzes the anti-1,4-elimination of the C-3 phosphate and the C-6 proR hydrogen from 5-enolpyruvylshikimate-3-phosphate (EPSP) to yield chorismate, which is the branch point compound that serves as the starting substrate for the three terminal pathways of aromatic amino acid biosynthesis. This reaction introduces a second double bond into the aromatic ring system. This is Chorismate synthase from Hydrogenovibrio crunogenus (strain DSM 25203 / XCL-2) (Thiomicrospira crunogena).